The primary structure comprises 312 residues: Ribosomal RNA small subunit methyltransferase H (312 aa).

Residues 35-37, Asp-55, Phe-79, Asp-100, and Gln-107 each bind S-adenosyl-L-methionine; that span reads GGH. A disordered region spans residues 279 to 312; sequence LVGKSQRPGPGEVAANPRSRSAVMRVAERTGGAA.

The protein belongs to the methyltransferase superfamily. RsmH family.

It is found in the cytoplasm. It catalyses the reaction cytidine(1402) in 16S rRNA + S-adenosyl-L-methionine = N(4)-methylcytidine(1402) in 16S rRNA + S-adenosyl-L-homocysteine + H(+). Specifically methylates the N4 position of cytidine in position 1402 (C1402) of 16S rRNA. This Aromatoleum aromaticum (strain DSM 19018 / LMG 30748 / EbN1) (Azoarcus sp. (strain EbN1)) protein is Ribosomal RNA small subunit methyltransferase H.